We begin with the raw amino-acid sequence, 56 residues long: Small ribosomal subunit protein uS14 (56 aa).

Cys-21, Cys-24, Cys-39, and Cys-42 together coordinate Zn(2+).

Belongs to the universal ribosomal protein uS14 family. As to quaternary structure, component of the 40S small ribosomal subunit. It depends on Zn(2+) as a cofactor.

The protein localises to the cytoplasm. It localises to the cytosol. Its subcellular location is the rough endoplasmic reticulum. This chain is Small ribosomal subunit protein uS14 (RpS29), found in Scarabaeus laticollis (Scarab dung beetle).